A 155-amino-acid chain; its full sequence is Small ribosomal subunit protein uS7 (155 aa).

The protein belongs to the universal ribosomal protein uS7 family. As to quaternary structure, part of the 30S ribosomal subunit. Contacts proteins S9 and S11.

Its function is as follows. One of the primary rRNA binding proteins, it binds directly to 16S rRNA where it nucleates assembly of the head domain of the 30S subunit. Is located at the subunit interface close to the decoding center, probably blocks exit of the E-site tRNA. This Xanthomonas axonopodis pv. citri (strain 306) protein is Small ribosomal subunit protein uS7.